The following is a 201-amino-acid chain: Small ribosomal subunit protein uS5 (201 aa).

Positions 1–28 (MARGEQQRGEGGQRRDRRDRNAPEERVD) are disordered. The region spanning 31–94 (IVEKLVHINR…EEAKKTMIRV (64 aa)) is the S5 DRBM domain. The disordered stretch occupies residues 173 to 201 (QIAAKRGKKVGDILGRRADGASAPEAIEG). Residues 181-191 (KVGDILGRRAD) show a composition bias toward basic and acidic residues.

It belongs to the universal ribosomal protein uS5 family. As to quaternary structure, part of the 30S ribosomal subunit. Contacts proteins S4 and S8.

Functionally, with S4 and S12 plays an important role in translational accuracy. Its function is as follows. Located at the back of the 30S subunit body where it stabilizes the conformation of the head with respect to the body. In Caulobacter vibrioides (strain ATCC 19089 / CIP 103742 / CB 15) (Caulobacter crescentus), this protein is Small ribosomal subunit protein uS5.